The following is a 278-amino-acid chain: HTH-type transcriptional activator RhaS (278 aa).

Residues N174 to G272 enclose the HTH araC/xylS-type domain. 2 DNA-binding regions (H-T-H motif) span residues E191–T212 and V239–F262.

As to quaternary structure, binds DNA as a dimer.

The protein localises to the cytoplasm. Activates expression of the rhaBAD and rhaT operons. The sequence is that of HTH-type transcriptional activator RhaS from Citrobacter koseri (strain ATCC BAA-895 / CDC 4225-83 / SGSC4696).